The sequence spans 96 residues: Small ribosomal subunit protein bS6 (96 aa).

It belongs to the bacterial ribosomal protein bS6 family.

Functionally, binds together with bS18 to 16S ribosomal RNA. The polypeptide is Small ribosomal subunit protein bS6 (rpsF) (Streptomyces coelicolor (strain ATCC BAA-471 / A3(2) / M145)).